Here is a 428-residue protein sequence, read N- to C-terminus: Enolase (428 aa).

Q164 is a binding site for (2R)-2-phosphoglycerate. The active-site Proton donor is the E206. D243, E286, and D313 together coordinate Mg(2+). (2R)-2-phosphoglycerate contacts are provided by K338, R367, S368, and K389. K338 serves as the catalytic Proton acceptor.

It belongs to the enolase family. The cofactor is Mg(2+).

It is found in the cytoplasm. Its subcellular location is the secreted. The protein resides in the cell surface. It catalyses the reaction (2R)-2-phosphoglycerate = phosphoenolpyruvate + H2O. It participates in carbohydrate degradation; glycolysis; pyruvate from D-glyceraldehyde 3-phosphate: step 4/5. Functionally, catalyzes the reversible conversion of 2-phosphoglycerate (2-PG) into phosphoenolpyruvate (PEP). It is essential for the degradation of carbohydrates via glycolysis. This chain is Enolase, found in Dehalococcoides mccartyi (strain ATCC BAA-2100 / JCM 16839 / KCTC 5957 / BAV1).